The following is a 346-amino-acid chain: Anthranilate phosphoribosyltransferase (346 aa).

5-phospho-alpha-D-ribose 1-diphosphate contacts are provided by residues glycine 81, glycine 84–aspartate 85, asparagine 91–threonine 94, lysine 109–serine 117, and serine 121. Position 81 (glycine 81) interacts with anthranilate. Residue serine 93 coordinates Mg(2+). Arginine 167 lines the anthranilate pocket. Mg(2+)-binding residues include aspartate 226 and glutamate 227.

This sequence belongs to the anthranilate phosphoribosyltransferase family. Homodimer. It depends on Mg(2+) as a cofactor.

The catalysed reaction is N-(5-phospho-beta-D-ribosyl)anthranilate + diphosphate = 5-phospho-alpha-D-ribose 1-diphosphate + anthranilate. Its pathway is amino-acid biosynthesis; L-tryptophan biosynthesis; L-tryptophan from chorismate: step 2/5. Its function is as follows. Catalyzes the transfer of the phosphoribosyl group of 5-phosphorylribose-1-pyrophosphate (PRPP) to anthranilate to yield N-(5'-phosphoribosyl)-anthranilate (PRA). The protein is Anthranilate phosphoribosyltransferase of Marinomonas sp. (strain MWYL1).